The sequence spans 88 residues: Sec-independent protein translocase protein TatA (88 aa).

Residues 1–21 (MGGASIWHWIVVGVIVMLLFG) form a helical membrane-spanning segment. Positions 62-88 (TEPVRTLPPHPTEPAPATHATVDRKVV) are disordered.

The protein belongs to the TatA/E family. The Tat system comprises two distinct complexes: a TatABC complex, containing multiple copies of TatA, TatB and TatC subunits, and a separate TatA complex, containing only TatA subunits. Substrates initially bind to the TatABC complex, which probably triggers association of the separate TatA complex to form the active translocon.

The protein localises to the cell inner membrane. Its function is as follows. Part of the twin-arginine translocation (Tat) system that transports large folded proteins containing a characteristic twin-arginine motif in their signal peptide across membranes. TatA could form the protein-conducting channel of the Tat system. This is Sec-independent protein translocase protein TatA from Methylobacterium sp. (strain 4-46).